Here is a 1437-residue protein sequence, read N- to C-terminus: Histone-lysine N-methyltransferase NSD3 (1437 aa).

2 disordered regions span residues 121 to 157 (PHEI…KLKI) and 181 to 252 (QASE…PVQP). A compositionally biased stretch (pro residues) spans 128–139 (PSPPQPPPPPSV). S150 bears the Phosphoserine mark. The short motif at 154-157 (KLKI) is the KIKL element. The segment covering 187–201 (KSKHESRKEKRKKSN) has biased composition (basic residues). Basic and acidic residues predominate over residues 202–248 (KHDSSRSEERKSHKIPKLEPEEQNRPNERVDTVSEKPREEPVLKEEA). Residues K218 and K245 each participate in a glycyl lysine isopeptide (Lys-Gly) (interchain with G-Cter in SUMO2) cross-link. Positions 270-333 (VGDLVWSKVG…EKRVREYKGH (64 aa)) constitute a PWWP 1 domain. Disordered stretches follow at residues 344–365 (TKQA…QRER) and 406–465 (AKKS…EPPP). K413 is covalently cross-linked (Glycyl lysine isopeptide (Lys-Gly) (interchain with G-Cter in SUMO2)). The span at 425 to 445 (VLNTQPEQTNAGEVASSLSST) shows a compositional bias: polar residues. S457 is modified (phosphoserine). Residues K502 and K532 each participate in a glycyl lysine isopeptide (Lys-Gly) (interchain with G-Cter in SUMO2) cross-link. Positions 540–696 (QDRLIISTPN…DSSLSRRGTG (157 aa)) are disordered. Over residues 546-571 (STPNQRNEKPTQSVSSPEATSGSTGS) the composition is skewed to polar residues. The segment covering 583 to 595 (TRSESEKSTEVVP) has biased composition (basic and acidic residues). Residues S585, S587, and S590 each carry the phosphoserine modification. Residue K628 forms a Glycyl lysine isopeptide (Lys-Gly) (interchain with G-Cter in SUMO2) linkage. S655 carries the post-translational modification Phosphoserine. Residues 682–692 (DVQSMDSSLSR) show a composition bias toward polar residues. 3 PHD-type zinc fingers span residues 701–748 (DTVC…CKTG), 749–805 (QHPC…CSME), and 862–955 (VGFC…CKAG). At K790 the chain carries N6-acetyllysine. The region spanning 960–1022 (YKQIVWVKLG…QGRVFPYVEG (63 aa)) is the PWWP 2 domain. Residues 1033–1069 (INKTFKKALEEAAKRFQELKAQRESKEALEIEKNSRK) are a coiled coil. Residues 1093-1143 (SEIPRCNCKPADENPCGLESECLNRMLQYECHPQVCPAGDRCQNQCFTKRL) form the AWS domain. One can recognise an SET domain in the interval 1145-1262 (PDAEIIKTER…AGMELTFNYN (118 aa)). K1151 participates in a covalent cross-link: Glycyl lysine isopeptide (Lys-Gly) (interchain with G-Cter in SUMO2). A Post-SET domain is found at 1269–1285 (GRTECHCGADNCSGFLG). Residues 1321–1368 (EDYCFQCGDGGELVMCDKKDCPKAYHLLCLNLTQPPYGKWECPWHQCD) form a PHD-type 4; atypical zinc finger.

This sequence belongs to the class V-like SAM-binding methyltransferase superfamily. Histone-lysine methyltransferase family. SET2 subfamily. As to quaternary structure, interacts with BRD4. Interacts (via KIKL motif) with BRD3 (via NET domain). As to expression, highly expressed in brain, heart and skeletal muscle. Expressed at lower level in liver and lung.

The protein localises to the nucleus. It localises to the chromosome. It carries out the reaction L-lysyl(4)-[histone H3] + 2 S-adenosyl-L-methionine = N(6),N(6)-dimethyl-L-lysyl(4)-[histone H3] + 2 S-adenosyl-L-homocysteine + 2 H(+). The enzyme catalyses L-lysyl(27)-[histone H3] + 2 S-adenosyl-L-methionine = N(6),N(6)-dimethyl-L-lysyl(27)-[histone H3] + 2 S-adenosyl-L-homocysteine + 2 H(+). Functionally, histone methyltransferase. Preferentially dimethylates 'Lys-4' and 'Lys-27' of histone H3 forming H3K4me2 and H3K27me2. H3 'Lys-4' methylation represents a specific tag for epigenetic transcriptional activation, while 'Lys-27' is a mark for transcriptional repression. In Homo sapiens (Human), this protein is Histone-lysine N-methyltransferase NSD3.